The sequence spans 122 residues: MNLIQQLEAEAIAEFKAKKEIPDFRAGDTVRVGVRVVEGERTRVQAYEGVCIARSNRGLGSNFTVRKISFGEGVERVFPLYSPNIDSITVVRRGVVRRAKLYYLRGRTGKSARIAERKVTKA.

This sequence belongs to the bacterial ribosomal protein bL19 family.

Functionally, this protein is located at the 30S-50S ribosomal subunit interface and may play a role in the structure and function of the aminoacyl-tRNA binding site. The chain is Large ribosomal subunit protein bL19 from Novosphingobium aromaticivorans (strain ATCC 700278 / DSM 12444 / CCUG 56034 / CIP 105152 / NBRC 16084 / F199).